Reading from the N-terminus, the 338-residue chain is Anthranilate phosphoribosyltransferase (338 aa).

Residues glycine 78, 81–82 (GD), threonine 86, 88–91 (NIST), 106–114 (KHGNRSVSS), and serine 118 contribute to the 5-phospho-alpha-D-ribose 1-diphosphate site. Glycine 78 serves as a coordination point for anthranilate. Residue serine 90 coordinates Mg(2+). Position 109 (asparagine 109) interacts with anthranilate. Arginine 164 contributes to the anthranilate binding site. Mg(2+) is bound by residues aspartate 223 and glutamate 224.

This sequence belongs to the anthranilate phosphoribosyltransferase family. In terms of assembly, homodimer. Mg(2+) serves as cofactor.

It carries out the reaction N-(5-phospho-beta-D-ribosyl)anthranilate + diphosphate = 5-phospho-alpha-D-ribose 1-diphosphate + anthranilate. Its pathway is amino-acid biosynthesis; L-tryptophan biosynthesis; L-tryptophan from chorismate: step 2/5. Catalyzes the transfer of the phosphoribosyl group of 5-phosphorylribose-1-pyrophosphate (PRPP) to anthranilate to yield N-(5'-phosphoribosyl)-anthranilate (PRA). The chain is Anthranilate phosphoribosyltransferase from Bacillus velezensis (strain DSM 23117 / BGSC 10A6 / LMG 26770 / FZB42) (Bacillus amyloliquefaciens subsp. plantarum).